Here is a 287-residue protein sequence, read N- to C-terminus: Protein HEXIM2 (287 aa).

Disordered stretches follow at residues M1–E212 and R266–S287. S31 is subject to Phosphoserine. T34 and T48 each carry phosphothreonine. Residues S53, S55, S73, S78, and S83 each carry the phosphoserine modification. Residues A89 to R105 show a composition bias toward basic residues. The span at K115–F134 shows a compositional bias: basic and acidic residues. Residues P142–T145 are interaction with P-TEFb. 2 stretches are compositionally biased toward basic and acidic residues: residues G181–E212 and R266–R280. Residues G208–G278 adopt a coiled-coil conformation. Positions Q227 to S287 are interaction with CCNT1, HEXIM1 and HEXIM2.

This sequence belongs to the HEXIM family. Homooligomer and heterooligomer with HEXIM1; probably dimeric. Core component of the 7SK RNP complex, at least composed of 7SK RNA, LARP7, MEPCE, HEXIM1 (or HEXIM2) and P-TEFb (composed of CDK9 and CCNT1/cyclin-T1). Interacts with CCNT2.

It localises to the nucleus. Transcriptional regulator which functions as a general RNA polymerase II transcription inhibitor. Core component of the 7SK RNP complex: in cooperation with 7SK snRNA sequesters P-TEFb in a large inactive 7SK snRNP complex preventing RNA polymerase II phosphorylation and subsequent transcriptional elongation. This Bos taurus (Bovine) protein is Protein HEXIM2 (HEXIM2).